We begin with the raw amino-acid sequence, 330 residues long: Delta-aminolevulinic acid dehydratase (330 aa).

Zn(2+) contacts are provided by Cys122, Cys124, His131, and Cys132. The active-site Schiff-base intermediate with substrate is the Lys199. At Lys199 the chain carries N6-succinyllysine. Residue Arg209 coordinates 5-aminolevulinate. A Phosphoserine modification is found at Ser215. Residue Arg221 participates in 5-aminolevulinate binding. Cys223 is a Zn(2+) binding site. Lys252 serves as the catalytic Schiff-base intermediate with substrate. The residue at position 252 (Lys252) is an N6-succinyllysine. Ser279 serves as a coordination point for 5-aminolevulinate.

This sequence belongs to the ALAD family. As to quaternary structure, homooctamer; active form. Homohexamer; low activity form. Requires Zn(2+) as cofactor.

Its subcellular location is the cytoplasm. It localises to the cytosol. It carries out the reaction 2 5-aminolevulinate = porphobilinogen + 2 H2O + H(+). The protein operates within porphyrin-containing compound metabolism; protoporphyrin-IX biosynthesis; coproporphyrinogen-III from 5-aminolevulinate: step 1/4. Can alternate between a fully active homooctamer and a low-activity homohexamer. A bound magnesium ion may promote the assembly of the fully active homooctamer. The magnesium-binding site is absent in the low-activity homohexamer. Inhibited by compounds that favor the hexameric state. Inhibited by divalent lead ions. The lead ions partially displace the zinc cofactor. Catalyzes an early step in the biosynthesis of tetrapyrroles. Binds two molecules of 5-aminolevulinate per subunit, each at a distinct site, and catalyzes their condensation to form porphobilinogen. The protein is Delta-aminolevulinic acid dehydratase (ALAD) of Pongo abelii (Sumatran orangutan).